We begin with the raw amino-acid sequence, 249 residues long: Chromosome-partitioning ATPase Soj (249 aa).

Lysine 15, glycine 16, glycine 17, valine 18, glycine 19, lysine 20, threonine 21, threonine 22, proline 207, and asparagine 209 together coordinate ATP. An ADP-binding site is contributed by glycine 17. Positions 19, 20, 21, 22, 207, and 209 each coordinate ADP. A Mg(2+)-binding site is contributed by threonine 21.

It belongs to the ParA family. Monomer in the absence of nucleotides or presence of ADP, in the presence of ATP is found in a monomer-dimer equilibrium. ATP-binding is required for DNA-binding. Probably interacts with Spo0J.

It carries out the reaction ATP + H2O = ADP + phosphate + H(+). With respect to regulation, ATPase activity is stimulated 10-fold in the presence of Spo0J and parS DNA (a plasmid centromere-like site or plasmid DNA itself). The first 20 residues of Spo0J stimulate its ATPase activity by 8%. ATPase probably involved in chromosome partitioning. Cooperatively binds dsDNA, forming nucleoprotein filaments in a strictly ATP-dependent fashion. Can also bind ssDNA with lower affinity. The chain is Chromosome-partitioning ATPase Soj from Thermus thermophilus (strain ATCC BAA-163 / DSM 7039 / HB27).